A 219-amino-acid chain; its full sequence is Sugar fermentation stimulation protein homolog (219 aa).

It belongs to the SfsA family.

The protein is Sugar fermentation stimulation protein homolog of Archaeoglobus fulgidus (strain ATCC 49558 / DSM 4304 / JCM 9628 / NBRC 100126 / VC-16).